A 280-amino-acid polypeptide reads, in one-letter code: Ribosomal RNA small subunit methyltransferase A (280 aa).

S-adenosyl-L-methionine contacts are provided by Asn-28, Leu-30, Gly-55, Glu-77, Asp-103, and Asn-122.

The protein belongs to the class I-like SAM-binding methyltransferase superfamily. rRNA adenine N(6)-methyltransferase family. RsmA subfamily.

It is found in the cytoplasm. It carries out the reaction adenosine(1518)/adenosine(1519) in 16S rRNA + 4 S-adenosyl-L-methionine = N(6)-dimethyladenosine(1518)/N(6)-dimethyladenosine(1519) in 16S rRNA + 4 S-adenosyl-L-homocysteine + 4 H(+). Specifically dimethylates two adjacent adenosines (A1518 and A1519) in the loop of a conserved hairpin near the 3'-end of 16S rRNA in the 30S particle. May play a critical role in biogenesis of 30S subunits. In Dinoroseobacter shibae (strain DSM 16493 / NCIMB 14021 / DFL 12), this protein is Ribosomal RNA small subunit methyltransferase A.